An 84-amino-acid polypeptide reads, in one-letter code: Exodeoxyribonuclease 7 small subunit (84 aa).

This sequence belongs to the XseB family. Heterooligomer composed of large and small subunits.

Its subcellular location is the cytoplasm. The enzyme catalyses Exonucleolytic cleavage in either 5'- to 3'- or 3'- to 5'-direction to yield nucleoside 5'-phosphates.. Its function is as follows. Bidirectionally degrades single-stranded DNA into large acid-insoluble oligonucleotides, which are then degraded further into small acid-soluble oligonucleotides. This is Exodeoxyribonuclease 7 small subunit from Azoarcus sp. (strain BH72).